Reading from the N-terminus, the 66-residue chain is MAKGKDARIPVLLECTACVRNGVNKESTGISRYITQKNRHNTPNRLELLKFCPYCYKHTIHGEIKK.

Belongs to the bacterial ribosomal protein bL33 family.

The protein localises to the plastid. It is found in the chloroplast. This chain is Large ribosomal subunit protein bL33c, found in Helianthus annuus (Common sunflower).